Reading from the N-terminus, the 515-residue chain is Histidine ammonia-lyase (515 aa).

A cross-link (5-imidazolinone (Ala-Gly)) is located at residues 145 to 147 (ASG). A 2,3-didehydroalanine (Ser) modification is found at serine 146.

The protein belongs to the PAL/histidase family. Post-translationally, contains an active site 4-methylidene-imidazol-5-one (MIO), which is formed autocatalytically by cyclization and dehydration of residues Ala-Ser-Gly.

The protein localises to the cytoplasm. The enzyme catalyses L-histidine = trans-urocanate + NH4(+). Its pathway is amino-acid degradation; L-histidine degradation into L-glutamate; N-formimidoyl-L-glutamate from L-histidine: step 1/3. This Gluconacetobacter diazotrophicus (strain ATCC 49037 / DSM 5601 / CCUG 37298 / CIP 103539 / LMG 7603 / PAl5) protein is Histidine ammonia-lyase.